A 113-amino-acid chain; its full sequence is U11-theraphotoxin-Hhn1m (113 aa).

The N-terminal stretch at 1 to 21 (MNTVRGTFLLVFGLAASLGQA) is a signal peptide. The propeptide occupies 22–74 (DKNENRREMQKKTEQGKSYLNFAENLLLQKLEELEAKLLEKHSKKSKNSRQKR). Disulfide bonds link Cys-75–Cys-90, Cys-82–Cys-95, and Cys-89–Cys-110.

It belongs to the neurotoxin 14 (magi-1) family. 01 (HNTX-16) subfamily. Expressed by the venom gland.

Its subcellular location is the secreted. Functionally, probable ion channel inhibitor. The polypeptide is U11-theraphotoxin-Hhn1m (Cyriopagopus hainanus (Chinese bird spider)).